A 494-amino-acid polypeptide reads, in one-letter code: Probable cytosol aminopeptidase (494 aa).

Residues lysine 260 and aspartate 265 each coordinate Mn(2+). The active site involves lysine 272. Residues aspartate 283, aspartate 342, and glutamate 344 each coordinate Mn(2+). Residue arginine 346 is part of the active site.

It belongs to the peptidase M17 family. It depends on Mn(2+) as a cofactor.

The protein resides in the cytoplasm. The enzyme catalyses Release of an N-terminal amino acid, Xaa-|-Yaa-, in which Xaa is preferably Leu, but may be other amino acids including Pro although not Arg or Lys, and Yaa may be Pro. Amino acid amides and methyl esters are also readily hydrolyzed, but rates on arylamides are exceedingly low.. It carries out the reaction Release of an N-terminal amino acid, preferentially leucine, but not glutamic or aspartic acids.. Presumably involved in the processing and regular turnover of intracellular proteins. Catalyzes the removal of unsubstituted N-terminal amino acids from various peptides. The sequence is that of Probable cytosol aminopeptidase from Bacillus cereus (strain Q1).